A 582-amino-acid polypeptide reads, in one-letter code: Aspartate--tRNA ligase (582 aa).

Glu174 lines the L-aspartate pocket. The tract at residues 198-201 (QITK) is aspartate. Arg220 lines the L-aspartate pocket. Residues 220-222 (RDE) and Gln229 each bind ATP. His443 contacts L-aspartate. An ATP-binding site is contributed by Glu477. Arg484 is an L-aspartate binding site. 529–532 (GLDR) is a binding site for ATP.

This sequence belongs to the class-II aminoacyl-tRNA synthetase family. Type 1 subfamily. Homodimer.

The protein resides in the cytoplasm. It carries out the reaction tRNA(Asp) + L-aspartate + ATP = L-aspartyl-tRNA(Asp) + AMP + diphosphate. In terms of biological role, catalyzes the attachment of L-aspartate to tRNA(Asp) in a two-step reaction: L-aspartate is first activated by ATP to form Asp-AMP and then transferred to the acceptor end of tRNA(Asp). The chain is Aspartate--tRNA ligase from Streptococcus pyogenes serotype M18 (strain MGAS8232).